A 451-amino-acid polypeptide reads, in one-letter code: Chromosomal replication initiator protein DnaA (451 aa).

A domain I, interacts with DnaA modulators region spans residues 1-72 (MQSIEDIWQE…ANILQEITGR (72 aa)). Positions 72-108 (RLFDVRFIDGEQEENFEYTVIKPNPALDEDGIEIGKH) are domain II. A domain III, AAA+ region region spans residues 109–325 (MLNPRYVFDT…GALIRVVAYS (217 aa)). Glycine 153, glycine 155, lysine 156, and threonine 157 together coordinate ATP. The domain IV, binds dsDNA stretch occupies residues 326 to 451 (SLVNKDITAG…KNLRKSQNMF (126 aa)).

Belongs to the DnaA family. As to quaternary structure, oligomerizes as a right-handed, spiral filament on DNA at oriC.

The protein resides in the cytoplasm. In terms of biological role, plays an essential role in the initiation and regulation of chromosomal replication. ATP-DnaA binds to the origin of replication (oriC) to initiate formation of the DNA replication initiation complex once per cell cycle. Binds the DnaA box (a 9 base pair repeat at the origin) and separates the double-stranded (ds)DNA. Forms a right-handed helical filament on oriC DNA; dsDNA binds to the exterior of the filament while single-stranded (ss)DNA is stabiized in the filament's interior. The ATP-DnaA-oriC complex binds and stabilizes one strand of the AT-rich DNA unwinding element (DUE), permitting loading of DNA polymerase. After initiation quickly degrades to an ADP-DnaA complex that is not apt for DNA replication. Binds acidic phospholipids. The sequence is that of Chromosomal replication initiator protein DnaA from Listeria welshimeri serovar 6b (strain ATCC 35897 / DSM 20650 / CCUG 15529 / CIP 8149 / NCTC 11857 / SLCC 5334 / V8).